The following is a 1130-amino-acid chain: DNA-directed RNA polymerase I subunit rpa2 (1130 aa).

Residues 1070–1096 (CKLCGSTLTIYSKKDYSNQTVSECKSC) form a C4-type zinc finger.

It belongs to the RNA polymerase beta chain family. As to quaternary structure, component of the RNA polymerase I (Pol I) complex consisting of 14 subunits.

The protein resides in the nucleus. It localises to the nucleolus. The catalysed reaction is RNA(n) + a ribonucleoside 5'-triphosphate = RNA(n+1) + diphosphate. Its function is as follows. DNA-dependent RNA polymerase catalyzes the transcription of DNA into RNA using the four ribonucleoside triphosphates as substrates. Second largest core component of RNA polymerase I which synthesizes ribosomal RNA precursors. Proposed to contribute to the polymerase catalytic activity and forms the polymerase active center together with the largest subunit. Pol I is composed of mobile elements and RPA2 is part of the core element with the central large cleft and probably a clamp element that moves to open and close the cleft. This is DNA-directed RNA polymerase I subunit rpa2 (polr1b) from Dictyostelium discoideum (Social amoeba).